A 322-amino-acid polypeptide reads, in one-letter code: Probable ethanolamine-phosphate cytidylyltransferase (322 aa).

Belongs to the cytidylyltransferase family.

The enzyme catalyses phosphoethanolamine + CTP + H(+) = CDP-ethanolamine + diphosphate. It functions in the pathway phospholipid metabolism; phosphatidylethanolamine biosynthesis; phosphatidylethanolamine from ethanolamine: step 2/3. The protein is Probable ethanolamine-phosphate cytidylyltransferase (MUQ1) of Encephalitozoon cuniculi (strain GB-M1) (Microsporidian parasite).